The following is a 337-amino-acid chain: uncharacterized protein (337 aa).

Over residues 42-66 (SHSVSPSPSPSDFSSSSSSSSSSPS) the composition is skewed to low complexity. Positions 42-68 (SHSVSPSPSPSDFSSSSSSSSSSPSTF) are disordered. In terms of domain architecture, Exonuclease spans 129-304 (FLVIDLEGKV…DDTKNITRVV (176 aa)). Mg(2+) is bound by residues D133, E135, and D234. E135 serves as the catalytic Proton acceptor. Residue E135 participates in AMP binding. The active-site Proton acceptor is H291. H291 serves as a coordination point for AMP. Residue D296 coordinates Mg(2+).

This is an uncharacterized protein from Arabidopsis thaliana (Mouse-ear cress).